A 230-amino-acid polypeptide reads, in one-letter code: Sugar fermentation stimulation protein homolog (230 aa).

Belongs to the SfsA family.

The chain is Sugar fermentation stimulation protein homolog from Clostridium botulinum (strain Alaska E43 / Type E3).